Reading from the N-terminus, the 418-residue chain is Serine hydroxymethyltransferase (418 aa).

Residues leucine 121 and 125–127 (GHL) contribute to the (6S)-5,6,7,8-tetrahydrofolate site. N6-(pyridoxal phosphate)lysine is present on lysine 230. 355-357 (SPF) contacts (6S)-5,6,7,8-tetrahydrofolate.

This sequence belongs to the SHMT family. Homodimer. Pyridoxal 5'-phosphate is required as a cofactor.

Its subcellular location is the cytoplasm. It carries out the reaction (6R)-5,10-methylene-5,6,7,8-tetrahydrofolate + glycine + H2O = (6S)-5,6,7,8-tetrahydrofolate + L-serine. It participates in one-carbon metabolism; tetrahydrofolate interconversion. It functions in the pathway amino-acid biosynthesis; glycine biosynthesis; glycine from L-serine: step 1/1. Catalyzes the reversible interconversion of serine and glycine with tetrahydrofolate (THF) serving as the one-carbon carrier. This reaction serves as the major source of one-carbon groups required for the biosynthesis of purines, thymidylate, methionine, and other important biomolecules. Also exhibits THF-independent aldolase activity toward beta-hydroxyamino acids, producing glycine and aldehydes, via a retro-aldol mechanism. This Streptococcus pneumoniae (strain P1031) protein is Serine hydroxymethyltransferase.